A 622-amino-acid polypeptide reads, in one-letter code: MSEREERRFVEIPRESVRLMAESTGLELSDEVAALLAEDVCYRLREATQNSSQFMKHTKRRKLTVEDFNRALRWSSVEAVCGYGSQEALPMRPAREGELYFPEDREVNLVELALATNIPKGCAETAVRVHVSYLDGKGNLAPQGSVPSAVSSLTDDLLKYYHQVTRAVLGDDPQLMKVALQDLQTNSKIGALLPYFVYVVSGVKSVSHDLEQLHRLLQVARSLFRNPHLCLGPYVRCLVGSVLYCVLEPLAASINPLNDHWTLRDGAALLLSHIFWTHGDLVSGLYQHILLSLQKILADPVRPLCCHYGAVVGLHALGWKAVERVLYPHLSTYWTNLQAVLDDYSVSNAQVKADGHKVYGAILVAVERLLKMKAQAAEPNRGGPGGRGCRRLDDLPWDSLLFQESSSGGGAEPSFGSGLPLPPGGAGPEDPSLSVTLADIYRELYAFFGDSLATRFGTGQPAPTAPRPPGDKKEPAAAPDSVRKMPQLTASAIVSPHGDESPRGSGGGGPASASGPAASESRPLPRVHRARGAPRQQGPGTGTRDVFQKSRFAPRGAPHFRFIIAGRQAGRRCRGRLFQTAFPAPYGPSPASRYVQKLPMIGRTSRPARRWALSDYSLYLPL.

2 disordered regions span residues 403 to 430 and 457 to 546; these read QESS…GPED and GTGQ…TRDV. Residues S495 and S501 each carry the phosphoserine modification. Residues 511 to 522 are compositionally biased toward low complexity; the sequence is ASASGPAASESR. Residues R555, R561, and R593 each carry the asymmetric dimethylarginine modification.

The protein belongs to the TAF6 family. The PCAF complex is composed of a number of TBP-associated factors (TAFS), such as TAF5, TAF5L, TAF6, TAF6L, TAF9, TAF10 and TAF12, PCAF, and also PCAF-associated factors (PAFs), such as TADA2L/ADA2, TADA3L/ADA3 and SPT3. Component of the STAGA transcription coactivator-HAT complex, at least composed of SUPT3H, GCN5L2, TAF5L, TAF6L, SUPT7L, TADA3L, TAD1L, TAF10, TAF12, TRRAP and TAF9.

The protein localises to the nucleus. Functionally, functions as a component of the PCAF complex. The PCAF complex is capable of efficiently acetylating histones in a nucleosomal context. The PCAF complex could be considered as the human version of the yeast SAGA complex. With TAF5L, acts as an epigenetic regulator essential for somatic reprogramming. Regulates target genes through H3K9ac deposition and MYC recruitment which trigger MYC regulatory network to orchestrate gene expression programs to control embryonic stem cell state. Functions with MYC to activate target gene expression through RNA polymerase II pause release. The protein is TAF6-like RNA polymerase II p300/CBP-associated factor-associated factor 65 kDa subunit 6L of Homo sapiens (Human).